A 183-amino-acid polypeptide reads, in one-letter code: UPF0340 protein LCA_1354 (183 aa).

The protein belongs to the UPF0340 family.

The sequence is that of UPF0340 protein LCA_1354 from Latilactobacillus sakei subsp. sakei (strain 23K) (Lactobacillus sakei subsp. sakei).